Here is a 427-residue protein sequence, read N- to C-terminus: Serine--tRNA ligase (427 aa).

233–235 provides a ligand contact to L-serine; it reads TAE. 264 to 266 provides a ligand contact to ATP; that stretch reads RSE. Glu-287 provides a ligand contact to L-serine. 351–354 is a binding site for ATP; it reads EISS. L-serine is bound at residue Ser-387.

This sequence belongs to the class-II aminoacyl-tRNA synthetase family. Type-1 seryl-tRNA synthetase subfamily. As to quaternary structure, homodimer. The tRNA molecule binds across the dimer.

The protein localises to the cytoplasm. It catalyses the reaction tRNA(Ser) + L-serine + ATP = L-seryl-tRNA(Ser) + AMP + diphosphate + H(+). The enzyme catalyses tRNA(Sec) + L-serine + ATP = L-seryl-tRNA(Sec) + AMP + diphosphate + H(+). It functions in the pathway aminoacyl-tRNA biosynthesis; selenocysteinyl-tRNA(Sec) biosynthesis; L-seryl-tRNA(Sec) from L-serine and tRNA(Sec): step 1/1. Catalyzes the attachment of serine to tRNA(Ser). Is also able to aminoacylate tRNA(Sec) with serine, to form the misacylated tRNA L-seryl-tRNA(Sec), which will be further converted into selenocysteinyl-tRNA(Sec). The chain is Serine--tRNA ligase from Buchnera aphidicola subsp. Schizaphis graminum (strain Sg).